The primary structure comprises 184 residues: MTSVDSQPDLSAAEAVLGAHVRDVMDFPKPGVVFKDITPLLSTPAAFGVVVGALADLARGLGATTIAGIEARGFLLAAPVADRVGAGIVPIRKQGKLPGRTRSEAYALEYGTAVLEIHEDAVPTGERVLIVDDVLATGGTAAAAHTLLRGCGADVVGLAVLMELTFLSGRDRTGTLDVTSIMKI.

The protein belongs to the purine/pyrimidine phosphoribosyltransferase family. In terms of assembly, homodimer.

It localises to the cytoplasm. The enzyme catalyses AMP + diphosphate = 5-phospho-alpha-D-ribose 1-diphosphate + adenine. It participates in purine metabolism; AMP biosynthesis via salvage pathway; AMP from adenine: step 1/1. In terms of biological role, catalyzes a salvage reaction resulting in the formation of AMP, that is energically less costly than de novo synthesis. The protein is Adenine phosphoribosyltransferase of Parafrankia sp. (strain EAN1pec).